Consider the following 512-residue polypeptide: DNA damage-binding protein CMR1 (512 aa).

The segment at serine 32–leucine 96 is disordered. Over residues isoleucine 34–aspartate 46 the composition is skewed to basic and acidic residues. Residues arginine 47 to valine 60 show a composition bias toward basic residues. WD repeat units follow at residues leucine 189 to glutamate 230, leucine 241 to isoleucine 281, aspartate 289 to asparagine 329, leucine 333 to glutamate 373, aspartate 390 to leucine 429, glycine 442 to leucine 481, and proline 482 to threonine 512.

This sequence belongs to the WD repeat DDB2/WDR76 family.

DNA-binding protein that binds to both single- and double-stranded DNA. Binds preferentially to UV-damaged DNA. May be involved in DNA-metabolic processes. The sequence is that of DNA damage-binding protein CMR1 from Kluyveromyces lactis (strain ATCC 8585 / CBS 2359 / DSM 70799 / NBRC 1267 / NRRL Y-1140 / WM37) (Yeast).